Reading from the N-terminus, the 165-residue chain is Large ribosomal subunit protein mL49 (165 aa).

Positions 42–75 are enriched in low complexity; it reads TTATTTTPLQQQQQQQPTTQPTTPIQTQTGAAPT. The disordered stretch occupies residues 42-81; that stretch reads TTATTTTPLQQQQQQQPTTQPTTPIQTQTGAAPTESTKPV.

This sequence belongs to the mitochondrion-specific ribosomal protein mL49 family. In terms of assembly, component of the mitochondrial large ribosomal subunit (mt-LSU). Mature N.crassa 74S mitochondrial ribosomes consist of a small (37S) and a large (54S) subunit. The 37S small subunit contains a 16S ribosomal RNA (16S mt-rRNA) and 32 different proteins. The 54S large subunit contains a 23S rRNA (23S mt-rRNA) and 42 different proteins.

It localises to the mitochondrion. Functionally, component of the mitochondrial ribosome (mitoribosome), a dedicated translation machinery responsible for the synthesis of mitochondrial genome-encoded proteins, including at least some of the essential transmembrane subunits of the mitochondrial respiratory chain. The mitoribosomes are attached to the mitochondrial inner membrane and translation products are cotranslationally integrated into the membrane. This Neurospora crassa (strain ATCC 24698 / 74-OR23-1A / CBS 708.71 / DSM 1257 / FGSC 987) protein is Large ribosomal subunit protein mL49 (img2).